The following is a 148-amino-acid chain: 3-hydroxyacyl-[acyl-carrier-protein] dehydratase FabZ (148 aa).

H55 is a catalytic residue.

Belongs to the thioester dehydratase family. FabZ subfamily.

It is found in the cytoplasm. The catalysed reaction is a (3R)-hydroxyacyl-[ACP] = a (2E)-enoyl-[ACP] + H2O. Its function is as follows. Involved in unsaturated fatty acids biosynthesis. Catalyzes the dehydration of short chain beta-hydroxyacyl-ACPs and long chain saturated and unsaturated beta-hydroxyacyl-ACPs. The sequence is that of 3-hydroxyacyl-[acyl-carrier-protein] dehydratase FabZ from Haemophilus influenzae (strain PittEE).